Here is a 205-residue protein sequence, read N- to C-terminus: Octanoyltransferase (205 aa).

The 176-residue stretch at 30–205 (NLSDELVWLL…ILKQEFHKIF (176 aa)) folds into the BPL/LPL catalytic domain. Residues 68 to 75 (RGGKYTYH), 140 to 142 (AFG), and 153 to 155 (GIA) each bind substrate. The active-site Acyl-thioester intermediate is the Cys171.

This sequence belongs to the LipB family.

The protein localises to the cytoplasm. The catalysed reaction is octanoyl-[ACP] + L-lysyl-[protein] = N(6)-octanoyl-L-lysyl-[protein] + holo-[ACP] + H(+). It participates in protein modification; protein lipoylation via endogenous pathway; protein N(6)-(lipoyl)lysine from octanoyl-[acyl-carrier-protein]: step 1/2. Catalyzes the transfer of endogenously produced octanoic acid from octanoyl-acyl-carrier-protein onto the lipoyl domains of lipoate-dependent enzymes. Lipoyl-ACP can also act as a substrate although octanoyl-ACP is likely to be the physiological substrate. The chain is Octanoyltransferase from Wolbachia pipientis subsp. Culex pipiens (strain wPip).